A 92-amino-acid polypeptide reads, in one-letter code: Large ribosomal subunit protein eL43 (92 aa).

The C4-type zinc finger occupies 39–60 (CDFCGKYGMKRQAVGIWCCKGC).

This sequence belongs to the eukaryotic ribosomal protein eL43 family.

The protein is Large ribosomal subunit protein eL43 (RPL37a) of Ostreococcus tauri.